The sequence spans 443 residues: Sulfoquinovose isomerase (443 aa).

The protein belongs to the SqvD family.

The enzyme catalyses 6-sulfo-beta-D-quinovose = 6-deoxy-6-sulfo-D-fructose. Its function is as follows. Part of the sulfo-EMP2 pathway, a D-sulfoquinovose degradation pathway that produces sulfolactate (SL). Catalyzes the isomerization of sulfoquinovose (SQ) to 6-deoxy-6-sulfo-D-fructose (SF). The protein is Sulfoquinovose isomerase of Alkalicoccus urumqiensis (Bacillus urumqiensis).